We begin with the raw amino-acid sequence, 308 residues long: Ribosomal RNA large subunit methyltransferase F (308 aa).

This sequence belongs to the methyltransferase superfamily. METTL16/RlmF family.

The protein localises to the cytoplasm. The catalysed reaction is adenosine(1618) in 23S rRNA + S-adenosyl-L-methionine = N(6)-methyladenosine(1618) in 23S rRNA + S-adenosyl-L-homocysteine + H(+). Specifically methylates the adenine in position 1618 of 23S rRNA. This is Ribosomal RNA large subunit methyltransferase F from Shigella boydii serotype 18 (strain CDC 3083-94 / BS512).